The chain runs to 469 residues: Argininosuccinate lyase (469 aa).

It belongs to the lyase 1 family. Argininosuccinate lyase subfamily.

It is found in the cytoplasm. The catalysed reaction is 2-(N(omega)-L-arginino)succinate = fumarate + L-arginine. It participates in amino-acid biosynthesis; L-arginine biosynthesis; L-arginine from L-ornithine and carbamoyl phosphate: step 3/3. The chain is Argininosuccinate lyase from Burkholderia cenocepacia (strain ATCC BAA-245 / DSM 16553 / LMG 16656 / NCTC 13227 / J2315 / CF5610) (Burkholderia cepacia (strain J2315)).